We begin with the raw amino-acid sequence, 418 residues long: Glutamyl-tRNA reductase (418 aa).

Substrate is bound by residues 49–52 (TCNR), S109, 114–116 (EPQ), and Q120. The active-site Nucleophile is the C50. 189 to 194 (GAGETI) contributes to the NADP(+) binding site.

This sequence belongs to the glutamyl-tRNA reductase family. Homodimer.

The enzyme catalyses (S)-4-amino-5-oxopentanoate + tRNA(Glu) + NADP(+) = L-glutamyl-tRNA(Glu) + NADPH + H(+). Its pathway is porphyrin-containing compound metabolism; protoporphyrin-IX biosynthesis; 5-aminolevulinate from L-glutamyl-tRNA(Glu): step 1/2. In terms of biological role, catalyzes the NADPH-dependent reduction of glutamyl-tRNA(Glu) to glutamate 1-semialdehyde (GSA). The sequence is that of Glutamyl-tRNA reductase from Escherichia coli O45:K1 (strain S88 / ExPEC).